Reading from the N-terminus, the 359-residue chain is Putative nucleotidyltransferase MAB21L1 (359 aa).

A ribonucleoside 5'-triphosphate contacts are provided by residues 23-24 (RK) and 63-66 (YEGL). Residues E73 and E75 each contribute to the Mg(2+) site. Residues K248 and 252 to 255 (SLLK) each bind a ribonucleoside 5'-triphosphate.

Belongs to the mab-21 family. In terms of assembly, monomer. Homodecamer; composed of 2 back to back homopentamers. The protein may exist as monomer in solution and oiligomerizes upon ligand binding.

Its subcellular location is the nucleus. Functionally, putative nucleotidyltransferase required for several aspects of embryonic development including normal development of the eye. It is unclear whether it displays nucleotidyltransferase activity in vivo. Binds single-stranded RNA (ssRNA). This Xenopus laevis (African clawed frog) protein is Putative nucleotidyltransferase MAB21L1 (mab21l1).